Here is a 95-residue protein sequence, read N- to C-terminus: Co-chaperonin GroES (95 aa).

The tract at residues 36–55 is disordered; sequence QEGEVVAVGSGKTLDDGSKV.

This sequence belongs to the GroES chaperonin family. As to quaternary structure, heptamer of 7 subunits arranged in a ring. Interacts with the chaperonin GroEL.

It is found in the cytoplasm. Together with the chaperonin GroEL, plays an essential role in assisting protein folding. The GroEL-GroES system forms a nano-cage that allows encapsulation of the non-native substrate proteins and provides a physical environment optimized to promote and accelerate protein folding. GroES binds to the apical surface of the GroEL ring, thereby capping the opening of the GroEL channel. The protein is Co-chaperonin GroES of Natranaerobius thermophilus (strain ATCC BAA-1301 / DSM 18059 / JW/NM-WN-LF).